The primary structure comprises 283 residues: Nickel/cobalt efflux system RcnA (283 aa).

At Met-1–Asn-12 the chain is on the periplasmic side. Residues Ala-13–His-33 form a helical membrane-spanning segment. Over Ser-34–Gly-56 the chain is Cytoplasmic. The chain crosses the membrane as a helical span at residues Leu-57–Ile-77. Residues Ser-78–Ala-86 lie on the Periplasmic side of the membrane. The chain crosses the membrane as a helical span at residues Glu-87–Trp-107. At Arg-108–Ile-184 the chain is on the cytoplasmic side. Residues Asp-127–His-162 form a disordered region. Basic and acidic residues-rich tracts occupy residues Glu-129–His-144 and Glu-151–His-162. The chain crosses the membrane as a helical span at residues Leu-185–Ile-205. The Periplasmic portion of the chain corresponds to Cys-206–Leu-218. A helical transmembrane segment spans residues Val-219–Ile-239. Residues Ser-240–Tyr-260 are Cytoplasmic-facing. The helical transmembrane segment at Phe-261–Ile-281 threads the bilayer. Residues Met-282 to Arg-283 lie on the Periplasmic side of the membrane.

It belongs to the NiCoT transporter (TC 2.A.52) family. RcnA subfamily.

It is found in the cell inner membrane. Efflux system for nickel and cobalt. In Escherichia coli O157:H7, this protein is Nickel/cobalt efflux system RcnA (rcnA).